Reading from the N-terminus, the 90-residue chain is Small ribosomal subunit protein uS17 (90 aa).

The protein belongs to the universal ribosomal protein uS17 family. As to quaternary structure, part of the 30S ribosomal subunit.

Its function is as follows. One of the primary rRNA binding proteins, it binds specifically to the 5'-end of 16S ribosomal RNA. The protein is Small ribosomal subunit protein uS17 of Burkholderia thailandensis (strain ATCC 700388 / DSM 13276 / CCUG 48851 / CIP 106301 / E264).